We begin with the raw amino-acid sequence, 467 residues long: Mothers against decapentaplegic homolog 2 (467 aa).

Position 2 is an N-acetylserine (serine 2). The residue at position 8 (threonine 8) is a Phosphothreonine; by MAPK3. In terms of domain architecture, MH1 spans proline 10–proline 176. Lysine 19 carries the N6-acetyllysine modification. 4 residues coordinate Zn(2+): cysteine 74, cysteine 149, cysteine 161, and histidine 166. Residues proline 207–isoleucine 217 show a composition bias toward polar residues. The tract at residues proline 207–proline 251 is disordered. Position 220 is a phosphothreonine (threonine 220). The PY-motif signature appears at proline 221 to tyrosine 225. The span at serine 233–threonine 243 shows a compositional bias: polar residues. Serine 240 carries the phosphoserine; by CAMK2 modification. Phosphoserine occurs at positions 245, 250, 255, 458, 460, and 464. In terms of domain architecture, MH2 spans tryptophan 274–serine 467. Phosphoserine; by TGFBR1 occurs at positions 465 and 467.

The protein belongs to the dwarfin/SMAD family. In terms of assembly, monomer; in the absence of TGF-beta. Heterodimer; in the presence of TGF-beta. Forms a heterodimer with co-SMAD, SMAD4, in the nucleus to form the transactivation complex SMAD2/SMAD4. Found in a complex with SMAD3 and TRIM33 upon addition of TGF-beta. Identified in a complex that contains at least ZNF451, SMAD2, SMAD3 and SMAD4. Interacts (via the MH2 domain) with ZFYVE9; may form trimers with the SMAD4 co-SMAD. Interacts with TAZ/WWRT1. Interacts with FOXH1. Interacts with SNW1. Interacts with CREB-binding protein (CBP) and EP300. Interacts with SNON. Interacts with ALK4/ACVR1B. Interacts with SKOR1. Interacts with SKOR2. Interacts with PRDM16. Interacts (via MH2 domain) with LEMD3. Interacts with RBPMS. Interacts with WWP1. Interacts (dephosphorylated form, via the MH1 and MH2 domains) with RANBP3 (via its C-terminal R domain); the interaction results in the export of dephosphorylated SMAD3 out of the nucleus and termination of the TGF-beta signaling. Interacts with PDPK1 (via PH domain). Interacts with DAB2; the interactions are enhanced upon TGF-beta stimulation. Interacts with USP15. Interacts with PPP5C. Interacts with LDLRAD4 (via the SMAD interaction motif). Interacts (via MH2 domain) with PMEPA1 (via the SMAD interaction motif). Interacts with ZFHX3. Interacts with ZNF451. Interacts with SMURF2 when phosphorylated on Ser-465/467. Interacts with PPM1A. Interacts with TGF-beta. Interacts with TGFBR1. Interacts with TGIF. Interacts with SMAD3 and TRIM33. Interacts with ZNF580. Interacts with NEDD4L in response to TGF-beta. Interacts with HGS. Interacts with AIP1. Interacts with WWP1. Interacts with PML. Interacts weakly with ZNF8. Interacts (when phosphorylated) with RNF111; RNF111 acts as an enhancer of the transcriptional responses by mediating ubiquitination and degradation of SMAD2 inhibitors. Interacts with YAP1 (when phosphorylated at 'Ser-127'). Interacts when phosphorylated with IPO7; the interaction facilitates translocation of SMAD2 to the nucleus. Interacts with MTMR4; negatively regulates TGF-beta signaling through SMAD2 dephosphorylation and retention in endosomes. Phosphorylated on one or several of Thr-220, Ser-245, Ser-250, and Ser-255. In response to TGF-beta, phosphorylated on Ser-465/467 by TGF-beta and activin type 1 receptor kinases. TGF-beta-induced Ser-465/467 phosphorylation declines progressively in a KMT5A-dependent manner. Able to interact with SMURF2 when phosphorylated on Ser-465/467, recruiting other proteins, such as SNON, for degradation. In response to decorin, the naturally occurring inhibitor of TGF-beta signaling, phosphorylated on Ser-240 by CaMK2. Phosphorylated by MAPK3 upon EGF stimulation; which increases transcriptional activity and stability, and is blocked by calmodulin. Phosphorylated by PDPK1. Post-translationally, in response to TGF-beta, ubiquitinated by NEDD4L; which promotes its degradation. Monoubiquitinated, leading to prevent DNA-binding. Deubiquitination by USP15 alleviates inhibition and promotes activation of TGF-beta target genes. Ubiquitinated by RNF111, leading to its degradation: only SMAD2 proteins that are 'in use' are targeted by RNF111, RNF111 playing a key role in activating SMAD2 and regulating its turnover. In terms of processing, acetylated on Lys-19 by coactivators in response to TGF-beta signaling, which increases transcriptional activity. Isoform short: Acetylation increases DNA binding activity in vitro and enhances its association with target promoters in vivo. Acetylation in the nucleus by EP300 is enhanced by TGF-beta. In terms of tissue distribution, expressed at high levels in skeletal muscle, endothelial cells, heart and placenta.

It localises to the cytoplasm. The protein resides in the nucleus. In terms of biological role, receptor-regulated SMAD (R-SMAD) that is an intracellular signal transducer and transcriptional modulator activated by TGF-beta (transforming growth factor) and activin type 1 receptor kinases. Binds the TRE element in the promoter region of many genes that are regulated by TGF-beta and, on formation of the SMAD2/SMAD4 complex, activates transcription. Promotes TGFB1-mediated transcription of odontoblastic differentiation genes in dental papilla cells. Positively regulates PDPK1 kinase activity by stimulating its dissociation from the 14-3-3 protein YWHAQ which acts as a negative regulator. May act as a tumor suppressor in colorectal carcinoma. This is Mothers against decapentaplegic homolog 2 (SMAD2) from Homo sapiens (Human).